A 1578-amino-acid chain; its full sequence is Pentafunctional AROM polypeptide (1578 aa).

Residues 1–384 (MTGPTKISIL…YEPRASVVPN (384 aa)) are 3-dehydroquinate synthase. Residues 44-46 (DTN), 81-84 (EVSK), 114-116 (GGV), and D119 each bind NAD(+). R130 contacts 7-phospho-2-dehydro-3-deoxy-D-arabino-heptonate. 139-140 (TT) is an NAD(+) binding site. The 7-phospho-2-dehydro-3-deoxy-D-arabino-heptonate site is built by D146 and K152. Residue K161 coordinates NAD(+). N162 contributes to the 7-phospho-2-dehydro-3-deoxy-D-arabino-heptonate binding site. Residues 179 to 182 (FLET) and N190 each bind NAD(+). Zn(2+) is bound at residue E194. 7-phospho-2-dehydro-3-deoxy-D-arabino-heptonate contacts are provided by residues 194 to 197 (EVIK) and K250. E260 functions as the Proton acceptor; for 3-dehydroquinate synthase activity in the catalytic mechanism. 7-phospho-2-dehydro-3-deoxy-D-arabino-heptonate-binding positions include 264-268 (RNLLN) and H271. H271 serves as a coordination point for Zn(2+). The active-site Proton acceptor; for 3-dehydroquinate synthase activity is the H275. Positions 287 and 356 each coordinate 7-phospho-2-dehydro-3-deoxy-D-arabino-heptonate. Residue H287 participates in Zn(2+) binding. The interval 397–842 (VYPGVSPASE…WDTLRQKFAV (446 aa)) is EPSP synthase. The active-site For EPSP synthase activity is the C824. The interval 864-1055 (SASVFIIGMR…KKKQHSFFVS (192 aa)) is shikimate kinase. An ATP-binding site is contributed by 871–878 (GMRGAGKT). The interval 1056-1276 (LTLPDVRGAD…AAPGQLSATD (221 aa)) is 3-dehydroquinase. The active-site Proton acceptor; for 3-dehydroquinate dehydratase activity is H1179. Catalysis depends on K1207, which acts as the Schiff-base intermediate with substrate; for 3-dehydroquinate dehydratase activity. Positions 1289–1578 (KKRFALFGSP…YERARAIVLG (290 aa)) are shikimate dehydrogenase.

It in the N-terminal section; belongs to the sugar phosphate cyclases superfamily. Dehydroquinate synthase family. The protein in the 2nd section; belongs to the EPSP synthase family. This sequence in the 3rd section; belongs to the shikimate kinase family. In the 4th section; belongs to the type-I 3-dehydroquinase family. It in the C-terminal section; belongs to the shikimate dehydrogenase family. In terms of assembly, homodimer. Zn(2+) is required as a cofactor.

The protein localises to the cytoplasm. It carries out the reaction 7-phospho-2-dehydro-3-deoxy-D-arabino-heptonate = 3-dehydroquinate + phosphate. The enzyme catalyses 3-dehydroquinate = 3-dehydroshikimate + H2O. The catalysed reaction is shikimate + NADP(+) = 3-dehydroshikimate + NADPH + H(+). It catalyses the reaction shikimate + ATP = 3-phosphoshikimate + ADP + H(+). It carries out the reaction 3-phosphoshikimate + phosphoenolpyruvate = 5-O-(1-carboxyvinyl)-3-phosphoshikimate + phosphate. The protein operates within metabolic intermediate biosynthesis; chorismate biosynthesis; chorismate from D-erythrose 4-phosphate and phosphoenolpyruvate: step 2/7. Its pathway is metabolic intermediate biosynthesis; chorismate biosynthesis; chorismate from D-erythrose 4-phosphate and phosphoenolpyruvate: step 3/7. It participates in metabolic intermediate biosynthesis; chorismate biosynthesis; chorismate from D-erythrose 4-phosphate and phosphoenolpyruvate: step 4/7. It functions in the pathway metabolic intermediate biosynthesis; chorismate biosynthesis; chorismate from D-erythrose 4-phosphate and phosphoenolpyruvate: step 5/7. The protein operates within metabolic intermediate biosynthesis; chorismate biosynthesis; chorismate from D-erythrose 4-phosphate and phosphoenolpyruvate: step 6/7. Functionally, the AROM polypeptide catalyzes 5 consecutive enzymatic reactions in prechorismate polyaromatic amino acid biosynthesis. This chain is Pentafunctional AROM polypeptide, found in Neosartorya fischeri (strain ATCC 1020 / DSM 3700 / CBS 544.65 / FGSC A1164 / JCM 1740 / NRRL 181 / WB 181) (Aspergillus fischerianus).